A 100-amino-acid chain; its full sequence is Small ribosomal subunit protein uS14c (100 aa).

Residues 28-45 show a composition bias toward basic and acidic residues; that stretch reads KKEIKKVPSLSEKMEIHG. The tract at residues 28–59 is disordered; it reads KKEIKKVPSLSEKMEIHGKLQSPPRNSAPTRL.

Belongs to the universal ribosomal protein uS14 family. As to quaternary structure, part of the 30S ribosomal subunit.

The protein localises to the plastid. It is found in the chloroplast. Functionally, binds 16S rRNA, required for the assembly of 30S particles. This Nandina domestica (Heavenly bamboo) protein is Small ribosomal subunit protein uS14c.